A 232-amino-acid polypeptide reads, in one-letter code: Dysfunctional anti-sigma-K factor RskA (232 aa).

Over Met-1–Thr-90 the chain is Cytoplasmic. The chain crosses the membrane as a helical span at residues Ala-91–Leu-111. The Extracellular portion of the chain corresponds to Thr-112 to Gly-232.

Belongs to the anti-sigma-K factor family.

It localises to the cell membrane. Functionally, an anti-sigma factor for extracytoplasmic function (ECF) sigma factor SigK. ECF sigma factors are held in an inactive form by an anti-sigma factor until released by regulated intramembrane proteolysis (RIP). However, in M.bovis this protein is probably dysfunctional, due to at least 1 of the 2 naturally occurring polymorphisms in its gene, when compared to M.tuberculosis. This leads to an increased expression of SigK-regulated genes, such as mpb70 and mpb83. RIP occurs when an extracytoplasmic signal triggers a concerted proteolytic cascade to transmit information and elicit cellular responses. The membrane-spanning regulatory substrate protein is first cut extracytoplasmically (site-1 protease, S1P), then within the membrane itself (site-2 protease, S2P, Rip1), while cytoplasmic proteases finish degrading the regulatory protein, liberating the sigma factor. This is Dysfunctional anti-sigma-K factor RskA (rskA) from Mycobacterium bovis (strain ATCC BAA-935 / AF2122/97).